Reading from the N-terminus, the 70-residue chain is DNA-directed RNA polymerase subunit omega (70 aa).

The protein belongs to the RNA polymerase subunit omega family. In terms of assembly, the RNAP catalytic core consists of 2 alpha, 1 beta, 1 beta' and 1 omega subunit. When a sigma factor is associated with the core the holoenzyme is formed, which can initiate transcription.

The catalysed reaction is RNA(n) + a ribonucleoside 5'-triphosphate = RNA(n+1) + diphosphate. In terms of biological role, promotes RNA polymerase assembly. Latches the N- and C-terminal regions of the beta' subunit thereby facilitating its interaction with the beta and alpha subunits. The protein is DNA-directed RNA polymerase subunit omega of Bacillus mycoides (strain KBAB4) (Bacillus weihenstephanensis).